The primary structure comprises 890 residues: DNA mismatch repair protein MutS (890 aa).

ATP is bound at residue 607–614 (GPNMSGKS). The disordered stretch occupies residues 832-851 (ESQLSFFGGEQSSKKQDKPL).

The protein belongs to the DNA mismatch repair MutS family.

This protein is involved in the repair of mismatches in DNA. It is possible that it carries out the mismatch recognition step. This protein has a weak ATPase activity. The protein is DNA mismatch repair protein MutS of Bacillus cereus (strain B4264).